Consider the following 874-residue polypeptide: Coatomer subunit gamma-1 (874 aa).

Over residues 1-11 the composition is skewed to basic and acidic residues; the sequence is MLKKFDKKDEE. The tract at residues 1 to 21 is disordered; it reads MLKKFDKKDEESGGGSNPLQH. HEAT repeat units follow at residues 64–101, 283–320, 322–355, and 356–392; these read TEAT…IAED, KELA…KHPS, VTAC…GSES, and SIDR…KYPR. At threonine 594 the chain carries Phosphothreonine. Residues 609-874 are interaction with ZNF289/ARFGAP2; the sequence is RQEIFQEQLA…PVDIILASVG (266 aa).

It belongs to the COPG family. As to quaternary structure, oligomeric complex that consists of at least the alpha, beta, beta', gamma, delta, epsilon and zeta subunits. Interacts with ZNF289/ARFGAP2 through its C-terminal appendage domain. Interacts with EGFR upon EGF treatment; interaction is essential for regulation of EGF-dependent nuclear transport of EGFR by retrograde trafficking from the Golgi to the ER. The coatomer interacts with KDEL receptors; the interaction is important for retrograde trafficking of KDEL-bearing proteins from the Golgi to the endoplasmic reticulum. Interacts with COPB1. Interacts with TMED10 (via C-terminus). Interacts with TMED2, TMED3, TMED7 and TMED9.

Its subcellular location is the cytoplasm. It localises to the cytosol. The protein resides in the golgi apparatus membrane. It is found in the cytoplasmic vesicle. The protein localises to the COPI-coated vesicle membrane. In terms of biological role, the coatomer is a cytosolic protein complex that binds to dilysine motifs and reversibly associates with Golgi non-clathrin-coated vesicles, which further mediate biosynthetic protein transport from the ER, via the Golgi up to the trans Golgi network. Coatomer complex is required for budding from Golgi membranes, and is essential for the retrograde Golgi-to-ER transport of dilysine-tagged proteins. In mammals, the coatomer can only be recruited by membranes associated to ADP-ribosylation factors (ARFs), which are small GTP-binding proteins; the complex also influences the Golgi structural integrity, as well as the processing, activity, and endocytic recycling of LDL receptors. Required for limiting lipid storage in lipid droplets. Involved in lipid homeostasis by regulating the presence of perilipin family members PLIN2 and PLIN3 at the lipid droplet surface and promoting the association of adipocyte triglyceride lipase (PNPLA2) with the lipid droplet surface to mediate lipolysis. The protein is Coatomer subunit gamma-1 (Copg1) of Mus musculus (Mouse).